A 455-amino-acid polypeptide reads, in one-letter code: Probable glycine dehydrogenase (decarboxylating) subunit 1 (455 aa).

This sequence belongs to the GcvP family. N-terminal subunit subfamily. As to quaternary structure, the glycine cleavage system is composed of four proteins: P, T, L and H. In this organism, the P 'protein' is a heterodimer of two subunits.

The enzyme catalyses N(6)-[(R)-lipoyl]-L-lysyl-[glycine-cleavage complex H protein] + glycine + H(+) = N(6)-[(R)-S(8)-aminomethyldihydrolipoyl]-L-lysyl-[glycine-cleavage complex H protein] + CO2. In terms of biological role, the glycine cleavage system catalyzes the degradation of glycine. The P protein binds the alpha-amino group of glycine through its pyridoxal phosphate cofactor; CO(2) is released and the remaining methylamine moiety is then transferred to the lipoamide cofactor of the H protein. This Francisella tularensis subsp. holarctica (strain LVS) protein is Probable glycine dehydrogenase (decarboxylating) subunit 1.